Consider the following 860-residue polypeptide: GAS2-like protein 2 (860 aa).

Over residues 1–12 (MSQHVGHGRRPR) the composition is skewed to basic residues. The tract at residues 1 to 22 (MSQHVGHGRRPRTPGPPVRSIR) is disordered. In terms of domain architecture, Calponin-homology (CH) spans 32 to 159 (EAMKEDLAEW…CLLELGRRAW (128 aa)). A GAR domain is found at 201–273 (CHFHNLDQMV…HYLDKHDPCR (73 aa)). 5 disordered regions span residues 281 to 459 (PGSF…SLAS), 473 to 574 (QLSE…RHTS), 697 to 743 (TTVR…KGKR), 758 to 781 (KLRPRIRPRRDHRPEKRPSRIPKP), and 801 to 860 (ATLG…ESWV). Residues 301–316 (GPSQPQPTMTISRSQS) are compositionally biased toward polar residues. Residues 347–364 (PPVRARTLREDPLPRSQE) are compositionally biased toward basic and acidic residues. Polar residues-rich tracts occupy residues 365-393 (KPTPSQRMSSPGPQFSSTCRGPDLQSTLS) and 473-485 (QLSEPMTVHSSSP). Residues 431-860 (QRLQIPEATS…PLSPEEESWV (430 aa)) are interaction with ADORA2A and GNAS. Residues 530-549 (NLDRSTHGHHSVEASGDHQT) are compositionally biased toward basic and acidic residues. The span at 724 to 733 (RSCSDPSSDK) shows a compositional bias: polar residues. Positions 758–768 (KLRPRIRPRRD) are enriched in basic residues. A compositionally biased stretch (polar residues) spans 828–840 (SNISLESSIQPAE).

This sequence belongs to the GAS2 family. As to quaternary structure, interacts with ADORA2A (via its cytoplasmic C-terminal domain). Interacts with GNAS, GNAL, GNAQ, and GNA13. Interacts with MAPRE1. As to expression, expressed in tracheal epithelial cells (at protein level).

The protein resides in the cytoplasm. The protein localises to the cytoskeleton. It localises to the cell membrane. Its subcellular location is the stress fiber. It is found in the cilium basal body. Its function is as follows. Involved in the cross-linking of microtubules and microfilaments. Regulates microtubule dynamics and stability by interacting with microtubule plus-end tracking proteins, such as MAPRE1, to regulate microtubule growth along actin stress fibers. Enhances ADORA2-mediated adenylyl cyclase activation by acting as a scaffold to recruit trimeric G-protein complexes to ADORA2A. Regulates ciliary orientation and performance in cells located in the airway. The chain is GAS2-like protein 2 (Gas2l2) from Mus musculus (Mouse).